A 210-amino-acid polypeptide reads, in one-letter code: ATP-dependent Clp protease proteolytic subunit (210 aa).

S106 acts as the Nucleophile in catalysis. H131 is an active-site residue.

Belongs to the peptidase S14 family. As to quaternary structure, fourteen ClpP subunits assemble into 2 heptameric rings which stack back to back to give a disk-like structure with a central cavity, resembling the structure of eukaryotic proteasomes.

Its subcellular location is the cytoplasm. It catalyses the reaction Hydrolysis of proteins to small peptides in the presence of ATP and magnesium. alpha-casein is the usual test substrate. In the absence of ATP, only oligopeptides shorter than five residues are hydrolyzed (such as succinyl-Leu-Tyr-|-NHMec, and Leu-Tyr-Leu-|-Tyr-Trp, in which cleavage of the -Tyr-|-Leu- and -Tyr-|-Trp bonds also occurs).. In terms of biological role, cleaves peptides in various proteins in a process that requires ATP hydrolysis. Has a chymotrypsin-like activity. Plays a major role in the degradation of misfolded proteins. In Azospirillum brasilense, this protein is ATP-dependent Clp protease proteolytic subunit.